Here is a 254-residue protein sequence, read N- to C-terminus: Nickel import ATP-binding protein NikD (254 aa).

In terms of domain architecture, ABC transporter spans 2–241 (PQQIELRDIA…PKHAVTRSLV (240 aa)). 36–43 (GGSGSGKS) provides a ligand contact to ATP.

This sequence belongs to the ABC transporter superfamily. Nickel importer (TC 3.A.1.5.3) family. The complex is composed of two ATP-binding proteins (NikD and NikE), two transmembrane proteins (NikB and NikC) and a solute-binding protein (NikA).

The protein resides in the cell inner membrane. The enzyme catalyses Ni(2+)(out) + ATP + H2O = Ni(2+)(in) + ADP + phosphate + H(+). Part of the ABC transporter complex NikABCDE involved in nickel import. Responsible for energy coupling to the transport system. The chain is Nickel import ATP-binding protein NikD from Shigella dysenteriae serotype 1 (strain Sd197).